An 864-amino-acid chain; its full sequence is A-kinase anchor protein 3 (864 aa).

Serine 12 is modified (phosphoserine; by STK33). The tract at residues valine 125–alanine 138 is PKA-RII subunit binding domain. 2 disordered regions span residues asparagine 190–glycine 235 and alanine 251–asparagine 281. Residues serine 204 to leucine 218 show a composition bias toward polar residues. Serine 206 bears the Phosphoserine mark. Residues lysine 219–glycine 235 show a composition bias toward basic and acidic residues. Serine 405 carries the post-translational modification Phosphoserine. Tyrosine 406 bears the Phosphotyrosine mark. The tract at residues valine 619–proline 638 is disordered. Residues glutamate 627–proline 638 show a composition bias toward basic and acidic residues.

The protein belongs to the AKAP110 family. Interacts with ROPN1 and ROPN1L. Interacts with QRICH2. In terms of processing, phosphorylated by STK33 during sperm flagella assembly. Phosphorylated on tyrosine.

It is found in the cytoplasmic vesicle. The protein resides in the secretory vesicle. The protein localises to the acrosome. Its subcellular location is the cell projection. It localises to the cilium. It is found in the flagellum. Its function is as follows. Structural component of sperm fibrous sheath. Required for the formation of the subcellular structure of the sperm flagellum, sperm motility and male fertility. The polypeptide is A-kinase anchor protein 3 (Mus musculus (Mouse)).